We begin with the raw amino-acid sequence, 56 residues long: Large ribosomal subunit protein eL37 (56 aa).

4 residues coordinate Zn(2+): C19, C22, C34, and C37. A C4-type zinc finger spans residues C19–C37.

It belongs to the eukaryotic ribosomal protein eL37 family. Zn(2+) is required as a cofactor.

Binds to the 23S rRNA. The protein is Large ribosomal subunit protein eL37 (rpl37e) of Methanosarcina acetivorans (strain ATCC 35395 / DSM 2834 / JCM 12185 / C2A).